A 92-amino-acid chain; its full sequence is Small ribosomal subunit protein uS19 (92 aa).

It belongs to the universal ribosomal protein uS19 family.

Its function is as follows. Protein S19 forms a complex with S13 that binds strongly to the 16S ribosomal RNA. In Halalkalibacterium halodurans (strain ATCC BAA-125 / DSM 18197 / FERM 7344 / JCM 9153 / C-125) (Bacillus halodurans), this protein is Small ribosomal subunit protein uS19 (rpsS).